Here is a 133-residue protein sequence, read N- to C-terminus: Nickel-responsive regulator (133 aa).

4 residues coordinate Ni(2+): His-76, His-87, His-89, and Cys-95.

It belongs to the transcriptional regulatory CopG/NikR family. As to quaternary structure, homotetramer. Ni(2+) serves as cofactor.

Transcriptional repressor of the nikABCDE operon. Is active in the presence of excessive concentrations of intracellular nickel. This Escherichia coli (strain SE11) protein is Nickel-responsive regulator.